We begin with the raw amino-acid sequence, 324 residues long: Glyoxylate/hydroxypyruvate reductase B (324 aa).

Residues Arg237 and Glu266 contribute to the active site. His285 acts as the Proton donor in catalysis.

It belongs to the D-isomer specific 2-hydroxyacid dehydrogenase family. GhrB subfamily. As to quaternary structure, homodimer.

It is found in the cytoplasm. It catalyses the reaction glycolate + NADP(+) = glyoxylate + NADPH + H(+). The catalysed reaction is (R)-glycerate + NAD(+) = 3-hydroxypyruvate + NADH + H(+). It carries out the reaction (R)-glycerate + NADP(+) = 3-hydroxypyruvate + NADPH + H(+). In terms of biological role, catalyzes the NADPH-dependent reduction of glyoxylate and hydroxypyruvate into glycolate and glycerate, respectively. The protein is Glyoxylate/hydroxypyruvate reductase B of Shigella dysenteriae serotype 1 (strain Sd197).